A 546-amino-acid polypeptide reads, in one-letter code: Protein FAM124A (546 aa).

Disordered stretches follow at residues 1-37 (MDPK…SELS), 286-360 (FPKP…FQRS), and 488-546 (SSSS…EFYI). Low complexity predominate over residues 24-36 (SDYSHLSSTSSEL). Over residues 286-302 (FPKPGRVHHASEKKRHS) the composition is skewed to basic residues. Composition is skewed to polar residues over residues 304 to 324 (PLPS…SPLN) and 347 to 360 (ANST…FQRS). Low complexity predominate over residues 488-511 (SSSSATARAAPPAPSTSTLTDSSP).

It belongs to the FAM124 family.

The polypeptide is Protein FAM124A (FAM124A) (Homo sapiens (Human)).